We begin with the raw amino-acid sequence, 101 residues long: Small ribosomal subunit protein uS14 (101 aa).

The protein belongs to the universal ribosomal protein uS14 family. As to quaternary structure, part of the 30S ribosomal subunit. Contacts proteins S3 and S10.

Binds 16S rRNA, required for the assembly of 30S particles and may also be responsible for determining the conformation of the 16S rRNA at the A site. In Tropheryma whipplei (strain TW08/27) (Whipple's bacillus), this protein is Small ribosomal subunit protein uS14.